The sequence spans 314 residues: Coiled-coil domain-containing protein 92 (314 aa).

Coiled-coil stretches lie at residues methionine 1–threonine 27 and aspartate 59–tyrosine 113. 2 disordered regions span residues leucine 153 to leucine 193 and alanine 251 to valine 314. Positions proline 176 to arginine 186 are enriched in basic and acidic residues. Serine 192 bears the Phosphoserine mark. Residues lysine 266 to histidine 280 are compositionally biased toward basic residues.

As to quaternary structure, interacts with CEP164. In terms of processing, phosphorylated at Ser-192 by TTBK2.

Its subcellular location is the cytoplasm. The protein resides in the cytoskeleton. The protein localises to the microtubule organizing center. It localises to the centrosome. It is found in the centriole. Interferon-stimulated protein that plays a role in innate immunity. The protein is Coiled-coil domain-containing protein 92 (Ccdc92) of Mus musculus (Mouse).